Reading from the N-terminus, the 213-residue chain is Orotate phosphoribosyltransferase (213 aa).

Lysine 26 lines the 5-phospho-alpha-D-ribose 1-diphosphate pocket. 34-35 lines the orotate pocket; sequence FF. Residues 72–73, arginine 99, lysine 100, lysine 103, histidine 105, and 124–132 contribute to the 5-phospho-alpha-D-ribose 1-diphosphate site; these read YK and DDVITAGTA. Residues threonine 128 and arginine 156 each coordinate orotate.

The protein belongs to the purine/pyrimidine phosphoribosyltransferase family. PyrE subfamily. In terms of assembly, homodimer. Requires Mg(2+) as cofactor.

The enzyme catalyses orotidine 5'-phosphate + diphosphate = orotate + 5-phospho-alpha-D-ribose 1-diphosphate. It participates in pyrimidine metabolism; UMP biosynthesis via de novo pathway; UMP from orotate: step 1/2. Its function is as follows. Catalyzes the transfer of a ribosyl phosphate group from 5-phosphoribose 1-diphosphate to orotate, leading to the formation of orotidine monophosphate (OMP). The chain is Orotate phosphoribosyltransferase from Pseudomonas putida (strain GB-1).